The primary structure comprises 224 residues: Toxin coregulated pilin (224 aa).

Positions 1 to 25 (MQLLKQLFKKKFVKEEHDKKTGQEG) are cleaved as a propeptide — atypical leader sequence. The residue at position 26 (M26) is an N-methylmethionine. Residues 26–46 (MTLLEVIIVLGIMGVVSAGVV) traverse the membrane as a helical segment. C145 and C211 form a disulfide bridge.

Its subcellular location is the fimbrium. It is found in the membrane. Major component of the toxin co-regulated pilus (tcp) which is a type IV pilus essential for bacterial aggregation and subsequent colonization in the host small intestine. This Vibrio cholerae protein is Toxin coregulated pilin (tcpA).